The following is a 339-amino-acid chain: Anthranilate phosphoribosyltransferase (339 aa).

5-phospho-alpha-D-ribose 1-diphosphate-binding positions include G81, 84 to 85 (GD), S89, 91 to 94 (NVSS), 109 to 117 (KHGNRALSS), and A121. G81 is a binding site for anthranilate. S93 is a Mg(2+) binding site. N112 provides a ligand contact to anthranilate. Residue R167 coordinates anthranilate. 2 residues coordinate Mg(2+): D225 and E226.

This sequence belongs to the anthranilate phosphoribosyltransferase family. Homodimer. The cofactor is Mg(2+).

It catalyses the reaction N-(5-phospho-beta-D-ribosyl)anthranilate + diphosphate = 5-phospho-alpha-D-ribose 1-diphosphate + anthranilate. It participates in amino-acid biosynthesis; L-tryptophan biosynthesis; L-tryptophan from chorismate: step 2/5. Its function is as follows. Catalyzes the transfer of the phosphoribosyl group of 5-phosphorylribose-1-pyrophosphate (PRPP) to anthranilate to yield N-(5'-phosphoribosyl)-anthranilate (PRA). This chain is Anthranilate phosphoribosyltransferase, found in Brucella canis (strain ATCC 23365 / NCTC 10854 / RM-666).